The following is a 405-amino-acid chain: MDTQAFKRSLHHSDRYNRRGFESPAKRAQALEKAYQSNLIASIRDNGYLLEHGRLRVKLAEAFGFCWGVERAVAMAYETRRHYPTESIWITNEIIHNPSVNDHLRNMNVRFISAEKGIKDFSSVEEGDVVILPAFGATVHEMKLLHERGCHIIDTTCPWVSKVWHTVEKHKKHEFSSIIHGKVKHEETLATSSFAGTYLVVLDLKEAQYVSDYILGKGNRDDFLRRFSRASSQGFDPDRDLKRLGVANQTTMLKSETEEIGRLFEKTMLRKYGPAELNEHFLAFNTICDATEERQDAMFSLVDEPLDLLVVIGGFNSSNTTHLQEIALAKGIRSFHIDTPERIGEIENTITHKPLGDDLRVESNFLPEGKINVGITSGASTPDRIVEHVIQKLINLSERKLMTEN.

Residue Cys66 coordinates [4Fe-4S] cluster. (2E)-4-hydroxy-3-methylbut-2-enyl diphosphate is bound at residue His96. A dimethylallyl diphosphate-binding site is contributed by His96. His96 contacts isopentenyl diphosphate. Cys157 is a [4Fe-4S] cluster binding site. A (2E)-4-hydroxy-3-methylbut-2-enyl diphosphate-binding site is contributed by His185. Residue His185 participates in dimethylallyl diphosphate binding. His185 serves as a coordination point for isopentenyl diphosphate. Catalysis depends on Glu187, which acts as the Proton donor. Position 250 (Thr250) interacts with (2E)-4-hydroxy-3-methylbut-2-enyl diphosphate. Position 288 (Cys288) interacts with [4Fe-4S] cluster. (2E)-4-hydroxy-3-methylbut-2-enyl diphosphate is bound by residues Ser317, Ser318, Asn319, and Ser380. The dimethylallyl diphosphate site is built by Ser317, Ser318, Asn319, and Ser380. Positions 317, 318, 319, and 380 each coordinate isopentenyl diphosphate.

It belongs to the IspH family. [4Fe-4S] cluster serves as cofactor.

It carries out the reaction isopentenyl diphosphate + 2 oxidized [2Fe-2S]-[ferredoxin] + H2O = (2E)-4-hydroxy-3-methylbut-2-enyl diphosphate + 2 reduced [2Fe-2S]-[ferredoxin] + 2 H(+). It catalyses the reaction dimethylallyl diphosphate + 2 oxidized [2Fe-2S]-[ferredoxin] + H2O = (2E)-4-hydroxy-3-methylbut-2-enyl diphosphate + 2 reduced [2Fe-2S]-[ferredoxin] + 2 H(+). The protein operates within isoprenoid biosynthesis; dimethylallyl diphosphate biosynthesis; dimethylallyl diphosphate from (2E)-4-hydroxy-3-methylbutenyl diphosphate: step 1/1. It functions in the pathway isoprenoid biosynthesis; isopentenyl diphosphate biosynthesis via DXP pathway; isopentenyl diphosphate from 1-deoxy-D-xylulose 5-phosphate: step 6/6. In terms of biological role, catalyzes the conversion of 1-hydroxy-2-methyl-2-(E)-butenyl 4-diphosphate (HMBPP) into a mixture of isopentenyl diphosphate (IPP) and dimethylallyl diphosphate (DMAPP). Acts in the terminal step of the DOXP/MEP pathway for isoprenoid precursor biosynthesis. The protein is 4-hydroxy-3-methylbut-2-enyl diphosphate reductase of Prochlorococcus marinus (strain SARG / CCMP1375 / SS120).